The chain runs to 495 residues: Glycerol kinase (495 aa).

An ADP-binding site is contributed by Thr13. The ATP site is built by Thr13, Thr14, and Ser15. Thr13 is a sn-glycerol 3-phosphate binding site. Residue Arg17 participates in ADP binding. Residues Arg83, Glu84, Tyr135, and Asp244 each contribute to the sn-glycerol 3-phosphate site. 5 residues coordinate glycerol: Arg83, Glu84, Tyr135, Asp244, and Gln245. Residues Thr266 and Gly309 each contribute to the ADP site. ATP-binding residues include Thr266, Gly309, Gln313, and Gly410. Residues Gly410 and Asn414 each contribute to the ADP site.

The protein belongs to the FGGY kinase family.

It carries out the reaction glycerol + ATP = sn-glycerol 3-phosphate + ADP + H(+). It participates in polyol metabolism; glycerol degradation via glycerol kinase pathway; sn-glycerol 3-phosphate from glycerol: step 1/1. Its activity is regulated as follows. Inhibited by fructose 1,6-bisphosphate (FBP). In terms of biological role, key enzyme in the regulation of glycerol uptake and metabolism. Catalyzes the phosphorylation of glycerol to yield sn-glycerol 3-phosphate. The protein is Glycerol kinase of Shewanella amazonensis (strain ATCC BAA-1098 / SB2B).